The sequence spans 65 residues: Large ribosomal subunit protein bL35 (65 aa).

A disordered region spans residues 1-26 (MPKMKTHRGAAKRFKKTGSGKLKRAK).

It belongs to the bacterial ribosomal protein bL35 family.

The sequence is that of Large ribosomal subunit protein bL35 from Clostridium novyi (strain NT).